Here is a 26-residue protein sequence, read N- to C-terminus: MAWKTPRYDETPVGMEINMYACAKRK.

Residues 16–20 (EINMY) constitute a cross-link (pyrroloquinoline quinone (Glu-Tyr)).

The protein belongs to the PqqA family.

It participates in cofactor biosynthesis; pyrroloquinoline quinone biosynthesis. Functionally, required for coenzyme pyrroloquinoline quinone (PQQ) biosynthesis. PQQ is probably formed by cross-linking a specific glutamate to a specific tyrosine residue and excising these residues from the peptide. This Cereibacter sphaeroides (strain ATCC 17029 / ATH 2.4.9) (Rhodobacter sphaeroides) protein is Coenzyme PQQ synthesis protein A.